The sequence spans 213 residues: Ribosomal RNA small subunit methyltransferase G (213 aa).

Residues Gly-72, Phe-77, 125–126 (IE), and Arg-141 contribute to the S-adenosyl-L-methionine site.

The protein belongs to the methyltransferase superfamily. RNA methyltransferase RsmG family.

Its subcellular location is the cytoplasm. The catalysed reaction is guanosine(527) in 16S rRNA + S-adenosyl-L-methionine = N(7)-methylguanosine(527) in 16S rRNA + S-adenosyl-L-homocysteine. Functionally, specifically methylates the N7 position of guanine in position 527 of 16S rRNA. This Sinorhizobium medicae (strain WSM419) (Ensifer medicae) protein is Ribosomal RNA small subunit methyltransferase G.